A 108-amino-acid chain; its full sequence is uncharacterized protein (108 aa).

The interval 1 to 108 (MAKVTSEPQK…DKEQSETSVL (108 aa)) is disordered. Residues 26-56 (KGRKKGKTPRQRRSRSGVKGLKTTRKAKRPL) show a composition bias toward basic residues. The segment covering 58–70 (GSSSQKAGETNTP) has biased composition (polar residues). Residues 73–92 (KPKKARGPILRGRYHRLKEK) show a composition bias toward basic residues. A compositionally biased stretch (basic and acidic residues) spans 93–108 (MKKEEADKEQSETSVL).

This is an uncharacterized protein from Homo sapiens (Human).